The primary structure comprises 150 residues: UPF0178 protein PC1_0756 (150 aa).

The protein belongs to the UPF0178 family.

In Pectobacterium carotovorum subsp. carotovorum (strain PC1), this protein is UPF0178 protein PC1_0756.